A 236-amino-acid chain; its full sequence is MDKETVKDIQRSIAMKLNRVEYTEVPLIEGYSEAEDCYKRFRDSLKKISDSITWLMTYEYGGSKMKSLYSKMTMITSTSRIGQFKNYDIYEANGLIGLEFSKIGVASSLSDTGKKYSKAYMDISRYKLEMNSRLEQQLKKISDLRDHSNAIDKKRKKVSNIRYDLEMEKKSKEPKTPSMVSRENDMERTFKETSKEALKEMERFIGNDGVSGVLQKVAEAHRMFTEKSAKALEEVK.

The disordered stretch occupies residues 169–188 (KKSKEPKTPSMVSRENDMER).

The protein belongs to the SWP12 family.

It is found in the spore wall. The polypeptide is Spore wall protein 12 (SWP12) (Encephalitozoon cuniculi (strain GB-M1) (Microsporidian parasite)).